The following is a 433-amino-acid chain: 3-phosphoshikimate 1-carboxyvinyltransferase (433 aa).

3 residues coordinate 3-phosphoshikimate: Lys22, Ser23, and Arg27. Phosphoenolpyruvate is bound at residue Lys22. The phosphoenolpyruvate site is built by Gly95 and Arg123. 3-phosphoshikimate contacts are provided by Ser166, Gln168, Asp314, and Lys341. Phosphoenolpyruvate is bound at residue Gln168. Catalysis depends on Asp314, which acts as the Proton acceptor. Residues Arg345 and Arg386 each coordinate phosphoenolpyruvate.

The protein belongs to the EPSP synthase family. As to quaternary structure, monomer.

Its subcellular location is the cytoplasm. It catalyses the reaction 3-phosphoshikimate + phosphoenolpyruvate = 5-O-(1-carboxyvinyl)-3-phosphoshikimate + phosphate. It participates in metabolic intermediate biosynthesis; chorismate biosynthesis; chorismate from D-erythrose 4-phosphate and phosphoenolpyruvate: step 6/7. Catalyzes the transfer of the enolpyruvyl moiety of phosphoenolpyruvate (PEP) to the 5-hydroxyl of shikimate-3-phosphate (S3P) to produce enolpyruvyl shikimate-3-phosphate and inorganic phosphate. The sequence is that of 3-phosphoshikimate 1-carboxyvinyltransferase from Acidithiobacillus ferrooxidans (strain ATCC 23270 / DSM 14882 / CIP 104768 / NCIMB 8455) (Ferrobacillus ferrooxidans (strain ATCC 23270)).